The chain runs to 175 residues: Peptide deformylase (175 aa).

Residues cysteine 98 and histidine 140 each coordinate Fe cation. Glutamate 141 is a catalytic residue. Residue histidine 144 participates in Fe cation binding.

This sequence belongs to the polypeptide deformylase family. It depends on Fe(2+) as a cofactor.

It catalyses the reaction N-terminal N-formyl-L-methionyl-[peptide] + H2O = N-terminal L-methionyl-[peptide] + formate. In terms of biological role, removes the formyl group from the N-terminal Met of newly synthesized proteins. Requires at least a dipeptide for an efficient rate of reaction. N-terminal L-methionine is a prerequisite for activity but the enzyme has broad specificity at other positions. This Nitrobacter hamburgensis (strain DSM 10229 / NCIMB 13809 / X14) protein is Peptide deformylase.